A 114-amino-acid chain; its full sequence is Propane 2-monooxygenase, effector component (114 aa).

This sequence belongs to the TmoD/XamoD family. In terms of assembly, the propane 2-monooxygenase multicomponent enzyme system is composed of an electron transfer component and a monooxygenase component interacting with the effector protein MimD. The electron transfer component is composed of a reductase (MimB), and the monooxygenase component is formed by a large subunit (MimA) and a small subunit (MimC).

Effector component of the propane 2-monooxygenase multicomponent enzyme system which is involved in the degradation of propane via the O2-dependent hydroxylation of propane. This Mycolicibacterium smegmatis (strain ATCC 700084 / mc(2)155) (Mycobacterium smegmatis) protein is Propane 2-monooxygenase, effector component.